Consider the following 182-residue polypeptide: MRGTEWREARDRVAEMFRKAGIALTPSELEKVEVADFGLGNLAVQGLQLVTYINTDRYCAKELALFPHQTCPEHLHPPVGGDPGKMETFRCRWGKVFLYVEGEPAASVQAAVPPGSEAYYTVFHEIVLTPGEQYTIPPGTKHWFQGGPEGAIVSEFSSTSRDEFDIFTDPKVERMPVIEFDD.

His-74, His-76, Glu-87, and His-142 together coordinate Mn(2+).

This sequence belongs to the D-lyxose ketol-isomerase family. In terms of assembly, homodimer. Requires Mn(2+) as cofactor.

The enzyme catalyses D-lyxose = D-xylulose. Its function is as follows. Sugar isomerase that catalyzes the reversible isomerization of D-lyxose to D-xylulose. Shows weak activity with D-mannose and L-ribose. This Cohnella laeviribosi protein is D-lyxose ketol-isomerase.